The primary structure comprises 527 residues: Ankyrin repeat domain-containing protein 42 (527 aa).

Residues 1–27 form a disordered region; it reads MPGVANPGPSKSRRETADSSSRKKVHF. The span at 12–21 shows a compositional bias: basic and acidic residues; that stretch reads SRRETADSSS. 10 ANK repeats span residues 25 to 54, 59 to 88, 92 to 121, 125 to 154, 158 to 187, 191 to 220, 228 to 257, 263 to 293, 297 to 326, and 330 to 360; these read VHFSSIHDAVRAGDVKQLSDIVERGANLNE, HQFTPLHWAAHSGSLECLHWLLWSGADATQ, RGWTAAHIAAIRGQDACLQALIINGANLAT, RGCTPLHLAATHGHSFSLQIMLRSGVDPSV, REWKPVHYASFHGRLGCLQLLVKWGCGIED, NGNLPVHLAAMEGHLHCLKFLLSRMNSATQ, NGENVLDLAQRFLKQNVVEFIQGAQYEGSH, DLAFPGHVAAFKGDLEVLKKLIGDGVINLNE, NGSTPMHKAAGQGHIDCLQWLIEMGAESNI, and AGETPSDVAKRFAHLAAVKLLEGLQKYEIDD. Residues 395–484 are a coiled coil; the sequence is NARMRAHKKI…ETLQKIQVTS (90 aa).

The sequence is that of Ankyrin repeat domain-containing protein 42 (Ankrd42) from Mus musculus (Mouse).